The sequence spans 403 residues: DNA primase DnaG (403 aa).

Positions 172 to 248 constitute a Toprim domain; the sequence is DSVIIVEGRA…HIDYIARAPP (77 aa). The Mg(2+) site is built by Glu-178, Asp-222, and Asp-224. The interval 279 to 300 is disordered; that stretch reads AAGEKTEAPAQPTQQQPPPAEA.

This sequence belongs to the archaeal DnaG primase family. As to quaternary structure, forms a ternary complex with MCM helicase and DNA. Component of the archaeal exosome complex. Requires Mg(2+) as cofactor.

The enzyme catalyses ssDNA + n NTP = ssDNA/pppN(pN)n-1 hybrid + (n-1) diphosphate.. Functionally, RNA polymerase that catalyzes the synthesis of short RNA molecules used as primers for DNA polymerase during DNA replication. Also part of the exosome, which is a complex involved in RNA degradation. Acts as a poly(A)-binding protein that enhances the interaction between heteromeric, adenine-rich transcripts and the exosome. This chain is DNA primase DnaG, found in Pyrobaculum neutrophilum (strain DSM 2338 / JCM 9278 / NBRC 100436 / V24Sta) (Thermoproteus neutrophilus).